We begin with the raw amino-acid sequence, 809 residues long: Acyl-homoserine lactone acylase QuiP (809 aa).

A signal peptide spans 1-26 (MASPAFSHFLPRFGVAAAVASALSLA). Ser-261 acts as the Nucleophile in catalysis.

It belongs to the peptidase S45 family. As to quaternary structure, heterodimer of an alpha subunit and a beta subunit processed from the same precursor.

It localises to the periplasm. The catalysed reaction is an N-acyl-L-homoserine lactone + H2O = L-homoserine lactone + a carboxylate. Functionally, catalyzes the deacylation of acyl-homoserine lactone (AHL or acyl-HSL), releasing homoserine lactone (HSL) and the corresponding fatty acid. Possesses a specificity for the degradation of long-chain acyl-HSLs (side chains of seven or more carbons in length). This Pseudomonas fluorescens (strain ATCC BAA-477 / NRRL B-23932 / Pf-5) protein is Acyl-homoserine lactone acylase QuiP (quiP).